A 171-amino-acid chain; its full sequence is MDKKSLYKYLLLRSTGDMRRAKSPTIMTRVTNNVYLGNYKNAMNAPSSEVKFKYVLNLTMDKYTLPNSNINIIHIPLVDDTTTDISKYFDDVTAFLSKCDQRNEPVLVHCVAGVNRSGAMILAYLMSKNKESSPMLYFLYVYHSMRDLRGAFVENPSFKRQIIEKYVIDKN.

In terms of domain architecture, Tyrosine-protein phosphatase spans 23-171 (SPTIMTRVTN…IIEKYVIDKN (149 aa)). The active-site Phosphocysteine intermediate is the C110.

This sequence belongs to the protein-tyrosine phosphatase family. Non-receptor class dual specificity subfamily. As to quaternary structure, homodimer.

The protein localises to the virion. The protein resides in the host cytoplasm. It catalyses the reaction O-phospho-L-tyrosyl-[protein] + H2O = L-tyrosyl-[protein] + phosphate. The enzyme catalyses O-phospho-L-seryl-[protein] + H2O = L-seryl-[protein] + phosphate. With respect to regulation, inhibited by NSC-62914, NSC-28086, NSC-105687, NSC-23173, 540211 and 217691 with IC50 values of 48, 51, 212, 342, 4 and 11 uM, respectively. In terms of biological role, serine/tyrosine phosphatase which down-regulates cellular antiviral response by dephosphorylating activated host STAT1 and blocking interferon (IFN)-stimulated innate immune responses. Dephosphorylates the OPG144 protein. The chain is Dual specificity protein phosphatase OPG106 (OPG106) from Homo sapiens (Human).